Consider the following 392-residue polypeptide: S-adenosylmethionine synthase (392 aa).

His-20 is an ATP binding site. Residue Asp-22 coordinates Mg(2+). Glu-48 contacts K(+). Residues Glu-61 and Gln-106 each contribute to the L-methionine site. The flexible loop stretch occupies residues 106-116 (QSRDIINAIEK). ATP is bound by residues 171–173 (DSK), Asp-248, 254–255 (RK), Ala-271, and Lys-275. Position 248 (Asp-248) interacts with L-methionine. Lys-279 contacts L-methionine.

It belongs to the AdoMet synthase family. Homotetramer; dimer of dimers. The cofactor is Mg(2+). It depends on K(+) as a cofactor.

It is found in the cytoplasm. The catalysed reaction is L-methionine + ATP + H2O = S-adenosyl-L-methionine + phosphate + diphosphate. It participates in amino-acid biosynthesis; S-adenosyl-L-methionine biosynthesis; S-adenosyl-L-methionine from L-methionine: step 1/1. In terms of biological role, catalyzes the formation of S-adenosylmethionine (AdoMet) from methionine and ATP. The overall synthetic reaction is composed of two sequential steps, AdoMet formation and the subsequent tripolyphosphate hydrolysis which occurs prior to release of AdoMet from the enzyme. This is S-adenosylmethionine synthase from Borreliella burgdorferi (strain ATCC 35210 / DSM 4680 / CIP 102532 / B31) (Borrelia burgdorferi).